The following is a 551-amino-acid chain: Calnexin homolog (551 aa).

A signal peptide spans 1-26; that stretch reads MVDRKEIPLAMGLLAVLLFFVASSSS. Over 27-480 the chain is Lumenal; sequence FHLVRASDEV…EKGEKQPNLT (454 aa). Residues Ser-44 and Asp-75 each coordinate Ca(2+). Cys-118 and Cys-153 are disulfide-bonded. 2 residues coordinate an alpha-D-glucoside: Tyr-122 and Lys-124. An N-linked (GlcNAc...) asparagine glycan is attached at Asn-140. Positions 144 and 151 each coordinate an alpha-D-glucoside. The disordered stretch occupies residues 226–330; sequence ALIPSKTIPD…CGEWKRPTKS (105 aa). A p domain (Extended arm) region spans residues 233 to 364; sequence IPDPDDKKPE…QEIPNPEYFE (132 aa). Basic and acidic residues-rich tracts occupy residues 234–269 and 276–295; these read PDPD…PREI and KPEP…AKPE. 5 consecutive repeat copies span residues 235–246, 252–263, 271–282, 289–299, and 303–313. 2 4 X approximate repeats regions span residues 235–299 and 303–360; these read DPDD…DWDD and GEWE…IPNP. Residues 296–305 show a composition bias toward acidic residues; the sequence is DWDDEEDGEW. The cysteines at positions 315 and 321 are disulfide-linked. 3 tandem repeats follow at residues 322-332, 336-346, and 350-360. Glu-379 lines the an alpha-D-glucoside pocket. Asp-390 lines the Ca(2+) pocket. The N-linked (GlcNAc...) asparagine glycan is linked to Asn-478. The chain crosses the membrane as a helical span at residues 481-501; the sequence is IGIIVSVVIVFVSIFFRLIFG. Residues 502–551 lie on the Cytoplasmic side of the membrane; the sequence is GKKPANVEANVEKKKTNTETTSKQDGGEKEDNKEKEETANPPRRRPKRDN. The tract at residues 510–551 is disordered; it reads ANVEKKKTNTETTSKQDGGEKEDNKEKEETANPPRRRPKRDN. The segment covering 526–539 has biased composition (basic and acidic residues); it reads DGGEKEDNKEKEET.

Belongs to the calreticulin family. In terms of tissue distribution, in vegetative and flowering tissues.

Its subcellular location is the endoplasmic reticulum membrane. Its function is as follows. Calcium-binding protein that interacts with newly synthesized monoglucosylated glycoproteins in the endoplasmic reticulum. It may act in assisting protein assembly and/or in the retention within the ER of unassembled protein subunits. It seems to play a major role in the quality control apparatus of the ER by the retention of incorrectly folded proteins. The sequence is that of Calnexin homolog from Pisum sativum (Garden pea).